A 307-amino-acid polypeptide reads, in one-letter code: Protoheme IX farnesyltransferase (307 aa).

A run of 8 helical transmembrane segments spans residues 32–52, 65–85, 108–128, 131–151, 158–178, 186–206, 251–271, and 287–307; these read MGIVNSNTLTVFTGFWLALHF, FFTIVGSGLVMAGVCCLNNYI, PGFALTFGLVILLLGFVFLLL, PMAVLMGFIGAFTYVVLYSLW, LNTVVGSISGAVPPLIGWAAI, IAWMLFLIMFIWQIPHFLALA, LGITFMVIATLLNIGWIVLGF, and FVYSLNYLTILFVSMIVVTFF.

The protein belongs to the UbiA prenyltransferase family. Protoheme IX farnesyltransferase subfamily. In terms of assembly, interacts with CtaA.

The protein resides in the cell membrane. The catalysed reaction is heme b + (2E,6E)-farnesyl diphosphate + H2O = Fe(II)-heme o + diphosphate. Its pathway is porphyrin-containing compound metabolism; heme O biosynthesis; heme O from protoheme: step 1/1. Its function is as follows. Converts heme B (protoheme IX) to heme O by substitution of the vinyl group on carbon 2 of heme B porphyrin ring with a hydroxyethyl farnesyl side group. This chain is Protoheme IX farnesyltransferase, found in Bacillus cereus (strain G9842).